A 255-amino-acid chain; its full sequence is MKIGVFDSGVGGFSVLKSLLKAQLFDEIIYYGDSARVPYGTKDPTTIKQFGLEALDFFKPHQIKLLIVACNTASALALEEMQKHSKIPVVGVIEPSILAIKRQVKDKNAPILVLGTKATIQSNAYDNALKQQGYLNVSHLATSLFVPLIEESILEGELLETCMRYYFTPLEILPEVVILGCTHFPLIAQKIEGYFMEHFALSTPPLLIHSGDAIVEYLQQNYALKKNACAFPKVEFHASGDVVWLEKQAKEWLKL.

Substrate is bound by residues Asp7–Ser8 and Tyr39–Gly40. Catalysis depends on Cys70, which acts as the Proton donor/acceptor. Asn71 to Thr72 contributes to the substrate binding site. Cys181 serves as the catalytic Proton donor/acceptor. Thr182 to His183 is a binding site for substrate.

It belongs to the aspartate/glutamate racemases family.

The enzyme catalyses L-glutamate = D-glutamate. The protein operates within cell wall biogenesis; peptidoglycan biosynthesis. Its function is as follows. Provides the (R)-glutamate required for cell wall biosynthesis. This chain is Glutamate racemase, found in Helicobacter pylori (strain ATCC 700392 / 26695) (Campylobacter pylori).